Here is a 408-residue protein sequence, read N- to C-terminus: Aminopeptidase T (408 aa).

A divalent metal cation is bound by residues Glu-250, Glu-316, Glu-340, His-345, His-376, and Asp-378.

The protein belongs to the peptidase M29 family. In terms of assembly, homodimer. The cofactor is Co(2+). Zn(2+) serves as cofactor. Requires Mg(2+) as cofactor.

In terms of biological role, metal-dependent exopeptidase. This Thermus aquaticus protein is Aminopeptidase T.